The following is a 327-amino-acid chain: tRNA dimethylallyltransferase (327 aa).

14 to 21 (GPTASGKT) provides a ligand contact to ATP. Residue 16–21 (TASGKT) coordinates substrate. 2 interaction with substrate tRNA regions span residues 39–42 (DSAL) and 163–167 (QRIQR).

It belongs to the IPP transferase family. In terms of assembly, monomer. Mg(2+) is required as a cofactor.

The enzyme catalyses adenosine(37) in tRNA + dimethylallyl diphosphate = N(6)-dimethylallyladenosine(37) in tRNA + diphosphate. Its function is as follows. Catalyzes the transfer of a dimethylallyl group onto the adenine at position 37 in tRNAs that read codons beginning with uridine, leading to the formation of N6-(dimethylallyl)adenosine (i(6)A). The polypeptide is tRNA dimethylallyltransferase (Xanthomonas euvesicatoria pv. vesicatoria (strain 85-10) (Xanthomonas campestris pv. vesicatoria)).